The primary structure comprises 508 residues: Glycerol kinase (508 aa).

Position 14 (Thr-14) interacts with ADP. Thr-14, Thr-15, and Ser-16 together coordinate ATP. Sn-glycerol 3-phosphate is bound at residue Thr-14. Arg-18 contributes to the ADP binding site. Sn-glycerol 3-phosphate-binding residues include Arg-84, Glu-85, Tyr-136, and Asp-245. The glycerol site is built by Arg-84, Glu-85, Tyr-136, Asp-245, and Gln-246. The ADP site is built by Thr-267 and Gly-314. The ATP site is built by Thr-267, Gly-314, Gln-318, and Gly-415. ADP is bound by residues Gly-415 and Asn-419.

Belongs to the FGGY kinase family.

The catalysed reaction is glycerol + ATP = sn-glycerol 3-phosphate + ADP + H(+). It participates in polyol metabolism; glycerol degradation via glycerol kinase pathway; sn-glycerol 3-phosphate from glycerol: step 1/1. With respect to regulation, inhibited by fructose 1,6-bisphosphate (FBP). Its function is as follows. Key enzyme in the regulation of glycerol uptake and metabolism. Catalyzes the phosphorylation of glycerol to yield sn-glycerol 3-phosphate. The sequence is that of Glycerol kinase from Bordetella parapertussis (strain 12822 / ATCC BAA-587 / NCTC 13253).